A 461-amino-acid polypeptide reads, in one-letter code: tRNA modification GTPase MnmE (461 aa).

Positions 21, 87, and 126 each coordinate (6S)-5-formyl-5,6,7,8-tetrahydrofolate. One can recognise a TrmE-type G domain in the interval 222–384; the sequence is QSTVVLYGEP…LLELLKSKLT (163 aa). Asn232 contributes to the K(+) binding site. Residues 232 to 237, 251 to 257, and 276 to 279 contribute to the GTP site; these read NTGKSS, SDVPGTT, and DTAG. Position 236 (Ser236) interacts with Mg(2+). K(+) is bound by residues Ser251, Val253, and Thr256. Thr257 contributes to the Mg(2+) binding site. Lys461 is a binding site for (6S)-5-formyl-5,6,7,8-tetrahydrofolate.

Belongs to the TRAFAC class TrmE-Era-EngA-EngB-Septin-like GTPase superfamily. TrmE GTPase family. Homodimer. Heterotetramer of two MnmE and two MnmG subunits. It depends on K(+) as a cofactor.

It localises to the cytoplasm. Functionally, exhibits a very high intrinsic GTPase hydrolysis rate. Involved in the addition of a carboxymethylaminomethyl (cmnm) group at the wobble position (U34) of certain tRNAs, forming tRNA-cmnm(5)s(2)U34. This chain is tRNA modification GTPase MnmE, found in Leptospira biflexa serovar Patoc (strain Patoc 1 / Ames).